A 678-amino-acid chain; its full sequence is Penicillin-binding protein activator LpoA (678 aa).

Residues 1–26 (MVPSTFSRLKAARCLPVVLAALIFAG) form the signal peptide. C27 carries the N-palmitoyl cysteine lipid modification. Residue C27 is the site of S-diacylglycerol cysteine attachment. Disordered regions lie at residues 302-340 (DVAEQPQPQTVDGVASPAQASVSDLTGDQPAAQPVPVSA) and 496-528 (ALTGTPITPRATTDSGMTTNNPTLQTTPTDDQF). 2 stretches are compositionally biased toward low complexity: residues 330–340 (QPAAQPVPVSA) and 513–528 (TTNNPTLQTTPTDDQF).

This sequence belongs to the LpoA family. In terms of assembly, interacts with PBP1a.

It localises to the cell outer membrane. Its function is as follows. Regulator of peptidoglycan synthesis that is essential for the function of penicillin-binding protein 1A (PBP1a). The polypeptide is Penicillin-binding protein activator LpoA (Shigella sonnei (strain Ss046)).